A 142-amino-acid chain; its full sequence is Hemoglobin subunit pi (142 aa).

The Globin domain maps to 2–142 (TLTQAEKAAV…VSSVLTEKYR (141 aa)). H59 and H88 together coordinate heme b.

Belongs to the globin family.

Functionally, the pi' chain is the counterpart of the alpha chain in the major early embryonic hemoglobin P. This is Hemoglobin subunit pi from Cairina moschata (Muscovy duck).